We begin with the raw amino-acid sequence, 513 residues long: TRAF3-interacting JNK-activating modulator (513 aa).

3 disordered regions span residues 1–96 (MISS…GQVS), 130–171 (SSGI…KAEE), and 381–402 (SLQGDGEQQSSETQDLQDQLKK). The Cytoplasmic portion of the chain corresponds to 1-485 (MISSDSRSSP…QLQVKENELQ (485 aa)). Basic and acidic residues-rich tracts occupy residues 17–31 (ESYEAKCERRQETRE) and 69–79 (RNLEEEKKGQA). A coiled-coil region spans residues 266-488 (MKKVLLEMED…VKENELQCGQ (223 aa)). Over residues 386–397 (GEQQSSETQDLQ) the composition is skewed to polar residues. The chain crosses the membrane as a helical; Anchor for type IV membrane protein span at residues 486 to 506 (CGQWLPVLMVVIATALAVFLA). Residues 507–513 (NKGNLVI) are Extracellular-facing.

Interacts (via its coiled-coil domain) with TRAF3 (via isoleucine zipper). Interacts with MAP2K1. Interacts with PPP2CA; this interaction targets PPP2CA to the lysosomes. Interacts with MAVS. Interacts with TBK1. As to expression, expressed in bone marrow, spleen and thymus. Not detected in heart, kidney and liver.

It is found in the cell membrane. The protein resides in the golgi apparatus membrane. It localises to the lysosome membrane. Its subcellular location is the mitochondrion outer membrane. Adapter protein that plays essential roles in both innate and adaptive immunity. Plays a crucial role in the regulation of thymocyte development. Mechanistically, mediates TCR-stimulated activation through recruiting MAP2K1/MEK1 to the Golgi and, thereby, facilitating the interaction of MAP2K1/MEK1 with its activator BRAF. Also plays an essential role in regulatory T-cell stability and function by recruiting the serine-threonine phosphatase catalytic subunit (PPP2CA) to the lysosome, thereby facilitating the interaction of PP2Ac with the mTORC1 component RPTOR and restricting glycolytic metabolism. Positively regulates TLR4 signaling activity in macrophage-mediated inflammation by acting as a molecular clamp to facilitate LPS-induced translocation of TLR4 to lipid rafts. In response to viral infection, facilitates the recruitment of TRAF3 to MAVS within mitochondria leading to IRF3 activation and interferon production. However, participates in the maintenance of immune homeostasis and the prevention of overzealous innate immunity by promoting 'Lys-48'-dependent ubiquitination of TBK1. This Mus musculus (Mouse) protein is TRAF3-interacting JNK-activating modulator (Traf3ip3).